A 351-amino-acid chain; its full sequence is Photosystem II D2 protein (351 aa).

Residues 39 to 59 (CAFLALGGWLTGTTFVTSWYT) traverse the membrane as a helical segment. His-116 contacts chlorophyll a. The helical transmembrane segment at 123–139 (GFMLRQFEIARLVGIRP) threads the bilayer. The pheophytin a site is built by Gln-128 and Asn-141. The chain crosses the membrane as a helical span at residues 151–164 (VFVSVFLMYPLGQS). A chlorophyll a-binding site is contributed by His-196. The helical transmembrane segment at 206-226 (GALLCAIHGATVENTLFEDGE) threads the bilayer. Residues His-213 and Phe-260 each contribute to the a plastoquinone site. A Fe cation-binding site is contributed by His-213. Fe cation is bound at residue His-267. Residues 277-293 (GLWMSAVGIVGLALNLR) traverse the membrane as a helical segment.

Belongs to the reaction center PufL/M/PsbA/D family. In terms of assembly, PSII is composed of 1 copy each of membrane proteins PsbA, PsbB, PsbC, PsbD, PsbE, PsbF, PsbH, PsbI, PsbJ, PsbK, PsbL, PsbM, PsbT, PsbX, PsbY, PsbZ, Psb30/Ycf12, peripheral proteins PsbO, CyanoQ (PsbQ), PsbU, PsbV and a large number of cofactors. It forms dimeric complexes. The D1/D2 heterodimer binds P680, chlorophylls that are the primary electron donor of PSII, and subsequent electron acceptors. It shares a non-heme iron and each subunit binds pheophytin, quinone, additional chlorophylls, carotenoids and lipids. There is also a Cl(-1) ion associated with D1 and D2, which is required for oxygen evolution. The PSII complex binds additional chlorophylls, carotenoids and specific lipids. is required as a cofactor.

It localises to the cellular thylakoid membrane. The catalysed reaction is 2 a plastoquinone + 4 hnu + 2 H2O = 2 a plastoquinol + O2. Its function is as follows. Photosystem II (PSII) is a light-driven water:plastoquinone oxidoreductase that uses light energy to abstract electrons from H(2)O, generating O(2) and a proton gradient subsequently used for ATP formation. It consists of a core antenna complex that captures photons, and an electron transfer chain that converts photonic excitation into a charge separation. The D1/D2 (PsbA/PsbD) reaction center heterodimer binds P680, the primary electron donor of PSII as well as several subsequent electron acceptors. D2 is needed for assembly of a stable PSII complex. In Trichormus variabilis (strain ATCC 29413 / PCC 7937) (Anabaena variabilis), this protein is Photosystem II D2 protein.